The sequence spans 187 residues: MDAIIIFLILFIVGVLIGVGVYYYKEKERKKTYKIIEMEIIENLKELKPYVAPDEGREYTKEFDLVEIALSYDIEDIIVVNDEGLVIATTLKDADEVGATASSIFEYIKKLCGNIKKVVIFKEDSYLYIYPLKLYGENLYVIIESKIALDVIEEKEILKRITGVLKKYFSTITTIEQEIPEEALLSI.

The chain crosses the membrane as a helical span at residues 3 to 23; it reads AIIIFLILFIVGVLIGVGVYY.

The protein localises to the membrane. This is an uncharacterized protein from Methanocaldococcus jannaschii (strain ATCC 43067 / DSM 2661 / JAL-1 / JCM 10045 / NBRC 100440) (Methanococcus jannaschii).